The sequence spans 182 residues: Large ribosomal subunit protein uL6 (182 aa).

This sequence belongs to the universal ribosomal protein uL6 family. In terms of assembly, part of the 50S ribosomal subunit.

Its function is as follows. This protein binds to the 23S rRNA, and is important in its secondary structure. It is located near the subunit interface in the base of the L7/L12 stalk, and near the tRNA binding site of the peptidyltransferase center. The chain is Large ribosomal subunit protein uL6 from Karelsulcia muelleri (strain GWSS) (Sulcia muelleri).